We begin with the raw amino-acid sequence, 1063 residues long: Cation efflux system protein CzcA (1063 aa).

10 helical membrane passes run 14 to 29 (WLVL…LGIF), 350 to 370 (GAVL…AALI), 452 to 472 (LIFG…LTGV), 487 to 507 (ALLG…ALFI), 534 to 554 (LANT…CVAI), 883 to 903 (VVVP…FNNI), 906 to 926 (GLLV…ALWI), 937 to 957 (VGFI…LSFI), 982 to 1004 (VLMT…GTGA), and 1013 to 1033 (VVIG…PVLY). The disordered stretch occupies residues 1040–1063 (DEDAEDTREPVTQTHQPDQGRQPA). Residues 1049 to 1063 (PVTQTHQPDQGRQPA) show a composition bias toward polar residues.

It belongs to the resistance-nodulation-cell division (RND) (TC 2.A.6) family.

It localises to the cell membrane. Has a low cation transport activity for cobalt, it is essential for the expression of cobalt, zinc, and cadmium resistance. CzcA and CzcB together would act in zinc efflux nearly as effectively as the complete CZC efflux system (CzcABC). The sequence is that of Cation efflux system protein CzcA (czcA) from Alcaligenes sp. (strain CT14).